The following is a 350-amino-acid chain: GDSL esterase/lipase At4g10955 (350 aa).

The protein belongs to the 'GDSL' lipolytic enzyme family.

In Arabidopsis thaliana (Mouse-ear cress), this protein is GDSL esterase/lipase At4g10955.